The chain runs to 492 residues: Putative heme-binding protein VNG_2021C (492 aa).

Histidine 177 provides a ligand contact to heme. The interval 253 to 301 (AGERVPAPEGGADAHGEGERTHHHGDSDHHDGDDGEQHHHSTGDEADDG) is disordered. Over residues 264-301 (ADAHGEGERTHHHGDSDHHDGDDGEQHHHSTGDEADDG) the composition is skewed to basic and acidic residues. An ABM domain is found at 402–490 (GTMGMFYETK…VLADRPRHVF (89 aa)).

In the N-terminal section; belongs to the ChdC family.

This is Putative heme-binding protein VNG_2021C from Halobacterium salinarum (strain ATCC 700922 / JCM 11081 / NRC-1) (Halobacterium halobium).